The primary structure comprises 1124 residues: MASNLTIDERWRVIEAYFKSKGLVRQHLDSYNDFVRNKLQEIIDEQGEIPTEIPGLKVRLGKIRIGKPRVRESDRGEREISPMEARLRNLTYAAPLWLTMIPVENNIEAEPEEVYIGDLPIMLKSAIDPISQYTLDKLIEIGEDPKDPGGYFIVNGSERVIVTQEDLAPNRVLVDTGKTGSNITHTAKIISSTAGYRVPVTIERLKDGTFHVSFPAVPGKIPFVILMRALGILTDRDIVYAVSLDPEVQNELFPSLEQASSIANVDDALDFIGSRVAIGQKRENRIEKAQQIIDKYFLPHLGTSAEDRKKKAYYLAYAISKVIELYLGRREPDDKDHYANKRLRLAGDLFASLFRVAFKAFVKDLTYQLEKSKVRGRKLALKALVRPDIVTERIRHALATGNWVGGRTGVSQLLDRTNWLSMLSHLRRVISSLARGQPNFEARDLHGTQWGRMCPFETPEGPNSGLVKNLALMAQIAVGINERIVEKTLYEMGVVPVEEVIRRVTEGGEDQNEYLKWSKVILNGRLIGYYQDGGELANKIRERRRKGEISDEVNVGHIVTDFINEVHVNCDSGRVRRPLIIVSNGNPLVTIEDIEKLESGAITFDDLVRQGKIEYLDAEEEENAYVALEPNDLTPDHTHLEIWSPAILGITASIIPYPEHNQSPRNTYQSAMAKQALGLYAANYQLRTDTRAHLLHYPQRPLVQTRALDIIGYTNRPAGNNAILAVMSFTGYNMEDSIIMNRSSVERGMYRSTFFRLYSTEEVKYPGGQEDKIVMPEAGVRGYKGKEYYRLLEDNGVVSPEVEVKGGDVLIGKVSPPRFLQEFKELSPEQAKRDTSIVTRHGEMGIVDLVLITETAEGNKLVKVRVRDLRIPTIGDKFASRHGQKGVIGMLIPQVDMPYTVKGVVPDIILNPHALPSRMTLGQIMEGIAGKYAALSGNIVDATPFYKTPIEQLQNEILRYGYLPDATEVVYDGRTGQKIKSRIYFGVVYYQKLHHMVADKLHARARGPVQILTRQPTEGRAREGGLRFGEMERDCLIGFGTAMLLKDRLLDNSDRTMIYVCDQCGYIGWYDKNKNKYVCPIHGDKSNLFPVTVSYAFKLLIQELMSMIISPRLVLEDKVGLSGG.

Zn(2+)-binding residues include Cys1061, Cys1064, Cys1079, and His1082.

The protein belongs to the RNA polymerase beta chain family. Part of the 13-subunit RNA polymerase complex. It depends on Zn(2+) as a cofactor.

It is found in the cytoplasm. It carries out the reaction RNA(n) + a ribonucleoside 5'-triphosphate = RNA(n+1) + diphosphate. Functionally, DNA-dependent RNA polymerase (RNAP) catalyzes the transcription of DNA into RNA using the four ribonucleoside triphosphates as substrates. This subunit is involved in DNA promoter recognition. This chain is DNA-directed RNA polymerase subunit Rpo2, found in Saccharolobus solfataricus (strain ATCC 35092 / DSM 1617 / JCM 11322 / P2) (Sulfolobus solfataricus).